The primary structure comprises 279 residues: Phosphatidylglycerol--prolipoprotein diacylglyceryl transferase (279 aa).

4 helical membrane passes run 4 to 24 (IGPLAIRWYGVLLTLAIFLGY), 44 to 64 (VVFWAVVFGVVGARLGYVLTS), 76 to 96 (LYIWHGGLSFHGAILGGGLTF), and 104 to 124 (GYPLWPYLDAATPGVALGIVA). Arg-126 serves as a coordination point for a 1,2-diacyl-sn-glycero-3-phospho-(1'-sn-glycerol). The next 3 helical transmembrane spans lie at 182-202 (LTQVYGAVVGLILLFLSLYWL), 206-226 (PFYGYAFWQFVLWYSVLRSVL), and 245-265 (LGIGLFTATQVVSLPLVLLSL).

It belongs to the Lgt family.

The protein resides in the cell inner membrane. The catalysed reaction is L-cysteinyl-[prolipoprotein] + a 1,2-diacyl-sn-glycero-3-phospho-(1'-sn-glycerol) = an S-1,2-diacyl-sn-glyceryl-L-cysteinyl-[prolipoprotein] + sn-glycerol 1-phosphate + H(+). It functions in the pathway protein modification; lipoprotein biosynthesis (diacylglyceryl transfer). Its function is as follows. Catalyzes the transfer of the diacylglyceryl group from phosphatidylglycerol to the sulfhydryl group of the N-terminal cysteine of a prolipoprotein, the first step in the formation of mature lipoproteins. This Thermus thermophilus (strain ATCC 27634 / DSM 579 / HB8) protein is Phosphatidylglycerol--prolipoprotein diacylglyceryl transferase.